Reading from the N-terminus, the 183-residue chain is Adenylate kinase (183 aa).

12–17 (GAGKGT) is an ATP binding site. An NMP region spans residues 32–61 (STGDLLRSEVAAGTALGQEAEAVMNRGELV). AMP contacts are provided by residues Thr33, Arg38, 59 to 61 (ELV), 86 to 89 (GFPR), and Gln93. Residues 127–133 (ARGRDDD) form an LID region. ATP is bound at residue Arg128. Residues Arg130 and Arg141 each contribute to the AMP site. Gly169 contributes to the ATP binding site.

The protein belongs to the adenylate kinase family. Monomer.

The protein localises to the cytoplasm. It catalyses the reaction AMP + ATP = 2 ADP. Its pathway is purine metabolism; AMP biosynthesis via salvage pathway; AMP from ADP: step 1/1. Functionally, catalyzes the reversible transfer of the terminal phosphate group between ATP and AMP. Plays an important role in cellular energy homeostasis and in adenine nucleotide metabolism. This chain is Adenylate kinase, found in Parasynechococcus marenigrum (strain WH8102).